The following is a 352-amino-acid chain: 3-dehydroquinate synthase (352 aa).

Residues 60-65 (DGEGAK), 118-119 (TT), Lys-131, Lys-140, and 158-161 (FLET) each bind NAD(+). Glu-173, His-237, and His-253 together coordinate Zn(2+).

It belongs to the sugar phosphate cyclases superfamily. Dehydroquinate synthase family. NAD(+) serves as cofactor. The cofactor is Co(2+). Zn(2+) is required as a cofactor.

The protein localises to the cytoplasm. It carries out the reaction 7-phospho-2-dehydro-3-deoxy-D-arabino-heptonate = 3-dehydroquinate + phosphate. Its pathway is metabolic intermediate biosynthesis; chorismate biosynthesis; chorismate from D-erythrose 4-phosphate and phosphoenolpyruvate: step 2/7. Functionally, catalyzes the conversion of 3-deoxy-D-arabino-heptulosonate 7-phosphate (DAHP) to dehydroquinate (DHQ). The protein is 3-dehydroquinate synthase of Sulfurisphaera tokodaii (strain DSM 16993 / JCM 10545 / NBRC 100140 / 7) (Sulfolobus tokodaii).